The primary structure comprises 309 residues: Ankyrin repeat protein VACWR203 (309 aa).

5 ANK repeats span residues 13–44, 110–142, 160–189, 197–231, and 269–298; these read SVFKGFSDKVRKNDLDMNVVKELLSNGASLTI, KYGTPLHILASNKKLITPNYMKLLVYNGNDINA, FVYHNIEYGIRYYNEKIIDAFIELGADLTI, PVVYCIHSNAEYGYNNITNIKIIRKLLNLSRRASH, and EGRTPLHCAIQHNFTQIAKYLLDRGADIVV.

This sequence belongs to the orthopoxviruses VACWR203 protein family.

The sequence is that of Ankyrin repeat protein VACWR203 from Bos taurus (Bovine).